The sequence spans 270 residues: MGNFILHPIQSRLIVISYSILILILPLYALFSYASNASWSLILEKATDPIAVAAYTLTIKMALYTAIINTIFGFIIAWVLTRYNFSGKRIMDAIVDLPLALPTSVAGLALSTVFGRNGLFGHILDFYNYEIIYTKRGILLAMIFVSFPFSVRAIQPILKEINKEEEEAAWSLGSGPLETFKRFIFPIILPAILNGFTLTFSRSLSEFGSIVMVAGNLPLQDLVSSVLISQYLEQYDYIGACVISIIVLMLACSVLLFVQIIHSLVVVDSK.

7 helical membrane-spanning segments follow: residues 13–33 (LIVI…LFSY), 61–81 (MALY…WVLT), 94–114 (IVDL…STVF), 138–158 (ILLA…QPIL), 180–200 (FKRF…TLTF), 208–228 (GSIV…SVLI), and 238–258 (IGAC…LLFV). Residues 55 to 256 (YTLTIKMALY…VLMLACSVLL (202 aa)) form the ABC transmembrane type-1 domain.

It belongs to the binding-protein-dependent transport system permease family. CysTW subfamily.

The protein resides in the plastid membrane. In terms of biological role, part of the ABC transporter complex cysAWTP (TC 3.A.1.6.1) involved in sulfate/thiosulfate import. Probably responsible for the translocation of the substrate across the membrane. This is Probable sulfate transport system permease protein cysT (cysT) from Helicosporidium sp. subsp. Simulium jonesii (Green alga).